The primary structure comprises 175 residues: Large ribosomal subunit protein uL10 (175 aa).

The protein belongs to the universal ribosomal protein uL10 family. As to quaternary structure, part of the ribosomal stalk of the 50S ribosomal subunit. The N-terminus interacts with L11 and the large rRNA to form the base of the stalk. The C-terminus forms an elongated spine to which L12 dimers bind in a sequential fashion forming a multimeric L10(L12)X complex.

Its function is as follows. Forms part of the ribosomal stalk, playing a central role in the interaction of the ribosome with GTP-bound translation factors. This Methylobacterium sp. (strain 4-46) protein is Large ribosomal subunit protein uL10.